Reading from the N-terminus, the 503-residue chain is T-complex protein 11 homolog (503 aa).

Residues 1–22 are compositionally biased toward basic and acidic residues; the sequence is MPDVKESVPPKYPGDSEGRSCK. 2 disordered regions span residues 1–42 and 254–285; these read MPDV…PPPF and DLTMSPPTCPDTSDSSSVAGPSPNEAANNPEP. Positions 263–285 are enriched in low complexity; that stretch reads PDTSDSSSVAGPSPNEAANNPEP. Residues 330-349 form a helical membrane-spanning segment; it reads LTVMASVLLVASSFSGSVLF.

It belongs to the TCP11 family. In terms of assembly, found in a complex at least composed of MROH2B, PRKACA isoform 2 and TCP11. Interacts with MROH2B. Interacts with PRKACA isoform 2. Isoform 2 and isoform 3 interact with ODF1 (via leucine zipper motif). Constitutively phosphorylated on serine, threonine and tyrosine residues within the head and tail regions of noncapacitated spermatozoa. Phosphorylation on tyrosine residues increases upon sperm capacitation within the acrosomal region in a protein kinase A (PKA)-dependent signaling pathway. As to expression, isoform 2 and isoform 3 are expressed in sperm. Isoform 1 is not detected in sperm (at protein level). Testis-specific. Isoform 1, isoform 2 and isoform 3 are expressed in sperm.

The protein resides in the membrane. It localises to the cell projection. The protein localises to the cilium. It is found in the flagellum. Its subcellular location is the cytoplasmic vesicle. The protein resides in the secretory vesicle. It localises to the acrosome. Its function is as follows. Plays a role in the process of sperm capacitation and acrosome reactions. Probable receptor for the putative fertilization-promoting peptide (FPP) at the sperm membrane that may modulate the activity of the adenylyl cyclase cAMP pathway. This chain is T-complex protein 11 homolog (TCP11), found in Homo sapiens (Human).